Consider the following 398-residue polypeptide: Acetate kinase (398 aa).

Residue Asn9 participates in Mg(2+) binding. Residue Lys16 participates in ATP binding. Arg93 provides a ligand contact to substrate. The active-site Proton donor/acceptor is Asp150. ATP-binding positions include 209 to 213 (HLGAG), 284 to 286 (DMR), and 329 to 333 (GIGEH). Mg(2+) is bound at residue Glu382.

It belongs to the acetokinase family. Homodimer. The cofactor is Mg(2+). Mn(2+) serves as cofactor.

It localises to the cytoplasm. The enzyme catalyses acetate + ATP = acetyl phosphate + ADP. Its pathway is metabolic intermediate biosynthesis; acetyl-CoA biosynthesis; acetyl-CoA from acetate: step 1/2. In terms of biological role, catalyzes the formation of acetyl phosphate from acetate and ATP. Can also catalyze the reverse reaction. The polypeptide is Acetate kinase (Rhodopseudomonas palustris (strain ATCC BAA-98 / CGA009)).